Here is a 750-residue protein sequence, read N- to C-terminus: Iron-sulfur clusters transporter ATM1, mitochondrial (750 aa).

The N-terminal 16 residues, Met-1–Phe-16, are a transit peptide targeting the mitochondrion. Residues Ile-17–Arg-124 lie on the Mitochondrial matrix side of the membrane. Low complexity-rich tracts occupy residues Thr-43–Ser-75 and Asp-87–Asn-100. The tract at residues Thr-43 to Asn-100 is disordered. Residues Val-125–Phe-146 traverse the membrane as a helical segment. An ABC transmembrane type-1 domain is found at Val-125–Gln-415. At Lys-147–Gly-169 the chain is on the mitochondrial intermembrane side. A helical membrane pass occupies residues Ser-170 to Phe-193. At Ala-194–Val-242 the chain is on the mitochondrial matrix side. The chain crosses the membrane as a helical span at residues Leu-243 to Tyr-266. Asn-267 is a topological domain (mitochondrial intermembrane). The chain crosses the membrane as a helical span at residues Tyr-268 to Ile-288. Over Gln-289 to Ala-354 the chain is Mitochondrial matrix. Glutathione-binding positions include Arg-294 to Arg-298 and Asn-357 to Gln-360. A helical transmembrane segment spans residues Phe-355 to Tyr-373. Over Met-374–Asp-388 the chain is Mitochondrial intermembrane. The helical transmembrane segment at Leu-389–Tyr-410 threads the bilayer. Gly-407 lines the glutathione pocket. Over Arg-411–Lys-750 the chain is Mitochondrial matrix. Residues Pro-437–Leu-462 are disordered. The segment covering Asn-445–Asn-460 has biased composition (low complexity). The 237-residue stretch at Ile-466–Trp-702 folds into the ABC transporter domain. ATP is bound by residues Tyr-475 and Gly-499 to Arg-510.

This sequence belongs to the ABC transporter superfamily. ABCB family. Heavy Metal importer (TC 3.A.1.210) subfamily. As to quaternary structure, homodimer.

The protein resides in the mitochondrion inner membrane. Its function is as follows. Performs an essential function in the generation of cytoplasmic iron-sulfur proteins by mediating the ATP-dependent export of Fe/S cluster precursors synthesized by NFS1 and other mitochondrial proteins. Hydrolyzes ATP. Binds glutathione and may function by transporting a glutathione-conjugated iron-sulfur compound. In Candida albicans (strain SC5314 / ATCC MYA-2876) (Yeast), this protein is Iron-sulfur clusters transporter ATM1, mitochondrial.